The following is a 141-amino-acid chain: Nucleoside diphosphate kinase (141 aa).

ATP is bound by residues lysine 11, phenylalanine 59, arginine 87, threonine 93, arginine 104, and asparagine 114. Histidine 117 serves as the catalytic Pros-phosphohistidine intermediate.

Belongs to the NDK family. Homotetramer. Mg(2+) serves as cofactor.

The protein resides in the cytoplasm. The enzyme catalyses a 2'-deoxyribonucleoside 5'-diphosphate + ATP = a 2'-deoxyribonucleoside 5'-triphosphate + ADP. It carries out the reaction a ribonucleoside 5'-diphosphate + ATP = a ribonucleoside 5'-triphosphate + ADP. In terms of biological role, major role in the synthesis of nucleoside triphosphates other than ATP. The ATP gamma phosphate is transferred to the NDP beta phosphate via a ping-pong mechanism, using a phosphorylated active-site intermediate. The chain is Nucleoside diphosphate kinase from Paracidovorax citrulli (strain AAC00-1) (Acidovorax citrulli).